Here is a 483-residue protein sequence, read N- to C-terminus: Scarecrow-like protein 26 (483 aa).

Residues Lys-95–Ala-477 enclose the GRAS domain. The tract at residues Leu-102 to Leu-165 is leucine repeat I (LRI). The segment at Phe-184–Ala-251 is VHIID. The VHIID motif lies at Ile-215–Asp-219. The segment at Glu-267–Ser-299 is leucine repeat II (LRII). Residues Val-308–Asn-400 form a PFYRE region. The tract at residues Thr-403–Ala-477 is SAW.

The protein belongs to the GRAS family. In terms of tissue distribution, expressed in seedlings, roots, leaves and flowers.

It is found in the nucleus. In terms of biological role, probable transcription factor involved in plant development. The sequence is that of Scarecrow-like protein 26 (SCL26) from Arabidopsis thaliana (Mouse-ear cress).